The chain runs to 212 residues: Small ribosomal subunit protein uS4c (212 aa).

The region spanning 89 to 152 (MRLDNIIFRL…RSRALVDKNL (64 aa)) is the S4 RNA-binding domain.

The protein belongs to the universal ribosomal protein uS4 family. Part of the 30S ribosomal subunit. Contacts protein S5. The interaction surface between S4 and S5 is involved in control of translational fidelity.

Its subcellular location is the plastid. The protein resides in the chloroplast. In terms of biological role, one of the primary rRNA binding proteins, it binds directly to 16S rRNA where it nucleates assembly of the body of the 30S subunit. Its function is as follows. With S5 and S12 plays an important role in translational accuracy. The polypeptide is Small ribosomal subunit protein uS4c (rps4) (Staurastrum punctulatum (Green alga)).